Here is a 269-residue protein sequence, read N- to C-terminus: Ribosomal RNA small subunit methyltransferase A (269 aa).

6 residues coordinate S-adenosyl-L-methionine: Asn18, Leu20, Gly45, Glu66, Asp91, and Asn112.

Belongs to the class I-like SAM-binding methyltransferase superfamily. rRNA adenine N(6)-methyltransferase family. RsmA subfamily.

Its subcellular location is the cytoplasm. The enzyme catalyses adenosine(1518)/adenosine(1519) in 16S rRNA + 4 S-adenosyl-L-methionine = N(6)-dimethyladenosine(1518)/N(6)-dimethyladenosine(1519) in 16S rRNA + 4 S-adenosyl-L-homocysteine + 4 H(+). Its function is as follows. Specifically dimethylates two adjacent adenosines (A1518 and A1519) in the loop of a conserved hairpin near the 3'-end of 16S rRNA in the 30S particle. May play a critical role in biogenesis of 30S subunits. This is Ribosomal RNA small subunit methyltransferase A from Shewanella loihica (strain ATCC BAA-1088 / PV-4).